The chain runs to 675 residues: Cytoplasmic tyrosine-protein kinase BMX (675 aa).

The region spanning 4 to 111 (KSILEELLLK…WLKALQKEIR (108 aa)) is the PH domain. Residues 113–149 (NPHLLVKYHSGFFVDGKFLCCQQSCKAAPGCTLWEAY) form a Btk-type zinc finger. Zn(2+)-binding residues include His-121, Cys-132, Cys-133, and Cys-143. Tyr-216 and Tyr-224 each carry phosphotyrosine; by autocatalysis. The 97-residue stretch at 296–392 (WFAGNISRSQ…GMITRLRHPV (97 aa)) folds into the SH2 domain. One can recognise a Protein kinase domain in the interval 417–675 (ITLLKELGSG…IEPLREKDKH (259 aa)). ATP-binding positions include 423 to 431 (LGSGQFGVV) and Lys-445. The active-site Proton acceptor is the Asp-536. Position 566 is a phosphotyrosine; by SRC and autocatalysis (Tyr-566). A CAV1-binding motif is present at residues 596 to 603 (WAFGILMW).

This sequence belongs to the protein kinase superfamily. Tyr protein kinase family. TEC subfamily. In terms of assembly, interacts with BCAR1, CAV1, MYD88, PTK2/FAK1, RUFY1, RUFY2, STAT3, TIRAP and TNFRSF1B. The cofactor is Zn(2+). Phosphorylated in response to protein I/II and to LPS. Phosphorylation at Tyr-566 by SRC and by autocatalysis leads to activation and is required for STAT3 phosphorylation by BMX. In terms of tissue distribution, highly expressed in cells with great migratory potential, including endothelial cells and metastatic carcinoma cell lines.

The protein resides in the cytoplasm. The enzyme catalyses L-tyrosyl-[protein] + ATP = O-phospho-L-tyrosyl-[protein] + ADP + H(+). With respect to regulation, TEK and vascular endothelial growth factor receptor 1 (FLT1) stimulate BMX tyrosine kinase activity. Activated by integrins through the mediation of PTK2/FAK1. Activated by TNF through the mediation of TNFRSF1B. Its function is as follows. Non-receptor tyrosine kinase that plays central but diverse modulatory roles in various signaling processes involved in the regulation of actin reorganization, cell migration, cell proliferation and survival, cell adhesion, and apoptosis. Participates in signal transduction stimulated by growth factor receptors, cytokine receptors, G-protein coupled receptors, antigen receptors and integrins. Induces tyrosine phosphorylation of BCAR1 in response to integrin regulation. Activation of BMX by integrins is mediated by PTK2/FAK1, a key mediator of integrin signaling events leading to the regulation of actin cytoskeleton and cell motility. Plays a critical role in TNF-induced angiogenesis, and implicated in the signaling of TEK and FLT1 receptors, 2 important receptor families essential for angiogenesis. Required for the phosphorylation and activation of STAT3, a transcription factor involved in cell differentiation. Also involved in interleukin-6 (IL6) induced differentiation. Also plays a role in programming adaptive cytoprotection against extracellular stress in different cell systems, salivary epithelial cells, brain endothelial cells, and dermal fibroblasts. May be involved in regulation of endocytosis through its interaction with an endosomal protein RUFY1. May also play a role in the growth and differentiation of hematopoietic cells; as well as in signal transduction in endocardial and arterial endothelial cells. This is Cytoplasmic tyrosine-protein kinase BMX (BMX) from Homo sapiens (Human).